A 1710-amino-acid chain; its full sequence is Neurexin-2 (1710 aa).

The N-terminal stretch at 1 to 28 (MALGSRWQPPPQLPPLLLLLALAAGVRG) is a signal peptide. In terms of domain architecture, Laminin G-like 1 spans 29 to 206 (LEFGGGPGQW…LRGAAADPLC (178 aa)). Residues 29–1634 (LEFGGGPGQW…EVIRESSSTT (1606 aa)) lie on the Extracellular side of the membrane. Asn-60 carries N-linked (GlcNAc...) asparagine glycosylation. The 41-residue stretch at 202-242 (ADPLCAPARNPCANGGLCTVLAPGEVGCDCSHTGFGGKFCS) folds into the EGF-like 1 domain. 3 disulfides stabilise this stretch: Cys-206/Cys-219, Cys-213/Cys-229, and Cys-231/Cys-241. Laminin G-like domains lie at 289–486 (VATF…SFRC) and 493–686 (DPVT…APFC). Position 335 (Asp-335) interacts with Ca(2+). Asn-338 is a glycosylation site (N-linked (GlcNAc...) asparagine). Leu-352 and Met-420 together coordinate Ca(2+). 5 cysteine pairs are disulfide-bonded: Cys-450-Cys-486, Cys-657-Cys-686, Cys-694-Cys-705, Cys-699-Cys-714, and Cys-716-Cys-726. The region spanning 690 to 727 (TLKQCASAPCRNGGICREGWNRFVCDCIGTGFLGRVCE) is the EGF-like 2 domain. 2 Laminin G-like domains span residues 732 to 904 (VLSY…ITYC) and 918 to 1093 (DPVT…ERGC). The Ca(2+) site is built by Asp-779 and Leu-796. N-linked (GlcNAc...) asparagine glycosylation is present at Asn-841. Arg-854 serves as a coordination point for Ca(2+). Intrachain disulfides connect Cys-1065/Cys-1093, Cys-1100/Cys-1111, Cys-1105/Cys-1120, and Cys-1122/Cys-1132. The EGF-like 3 domain maps to 1096-1133 (PSTTCTEESCANQGVCLQQWDGFTCDCTMTSYGGPVCN). One can recognise a Laminin G-like 6 domain in the interval 1137–1345 (TTYIFGKGGA…HLRLVGEGPS (209 aa)). Ca(2+) is bound by residues Asp-1189, Val-1206, Ile-1288, and Asn-1290. Ser-1400 carries O-linked (Xyl...) (heparan sulfate) serine glycosylation. Disordered stretches follow at residues 1458–1508 (ATQD…LPPT) and 1587–1621 (EPRR…RGPP). Residues 1635–1655 (GMVVGIVAAAALCILILLYAM) form a helical membrane-spanning segment. At 1656–1710 (YKYRNRDEGSYQVDQSRNYISNSAQSNGAVVKEKAPAAPKTPSKAKKNKDKEYYV) the chain is on the cytoplasmic side. The interval 1677–1710 (NSAQSNGAVVKEKAPAAPKTPSKAKKNKDKEYYV) is disordered.

In terms of assembly, the laminin G-like domain 1 binds to NXPH1. Interacts with PATJ. Interacts with CBLN1, CBLN2 and, less avidly, with CBLN4. Specific isoforms bind neuroligins NLGN1, NLGN2 and NLGN3. Specific isoforms bind to alpha-dystroglycan. Interacts (via Laminin G-like 1 domain) with IGSF21 (Ig-like 1 domain) in a trans-interaction manner. Interacts with CLSTN3. O-glycosylated; contains heparan sulfate. Heparan sulfate attachment is required for synapse development by mediating interactions with neuroligins.

The protein resides in the presynaptic cell membrane. Its function is as follows. Neuronal cell surface protein that may be involved in cell recognition and cell adhesion. May mediate intracellular signaling. This is Neurexin-2 from Mus musculus (Mouse).